Reading from the N-terminus, the 128-residue chain is Transcription antitermination protein NusB (128 aa).

It belongs to the NusB family.

In terms of biological role, involved in transcription antitermination. Required for transcription of ribosomal RNA (rRNA) genes. Binds specifically to the boxA antiterminator sequence of the ribosomal RNA (rrn) operons. This chain is Transcription antitermination protein NusB, found in Listeria monocytogenes serotype 4b (strain CLIP80459).